Here is a 296-residue protein sequence, read N- to C-terminus: NADH-cytochrome b5 reductase 2-A (296 aa).

A helical membrane pass occupies residues 15 to 35 (FVIGAPTIALCSYYYSSGAFL). The FAD-binding FR-type domain maps to 47–151 (NNWIDLPISR…KGPIPKWKWV (105 aa)). Residue 154–189 (SFESITLIGGGTGITPLYQLIHAITKNPNDKTKIRL) participates in FAD binding.

It belongs to the flavoprotein pyridine nucleotide cytochrome reductase family. Requires FAD as cofactor.

The protein resides in the mitochondrion outer membrane. It carries out the reaction 2 Fe(III)-[cytochrome b5] + NADH = 2 Fe(II)-[cytochrome b5] + NAD(+) + H(+). May mediate the reduction of outer membrane cytochrome b5. This chain is NADH-cytochrome b5 reductase 2-A (MCR1A), found in Vanderwaltozyma polyspora (strain ATCC 22028 / DSM 70294 / BCRC 21397 / CBS 2163 / NBRC 10782 / NRRL Y-8283 / UCD 57-17) (Kluyveromyces polysporus).